A 200-amino-acid chain; its full sequence is WASH complex subunit 3 (200 aa).

Positions 56 to 76 (SLRIQQIETTLSILEAKLASI) form a coiled coil. 2 disordered regions span residues 87–130 (VRAP…AENI) and 165–200 (DPNL…SFSD).

The protein belongs to the CCDC53 family. In terms of assembly, component of the WASH complex.

The protein is WASH complex subunit 3 of Danio rerio (Zebrafish).